A 356-amino-acid chain; its full sequence is Biotin synthase (356 aa).

The interval 1 to 28 (MTIQANVPTGDETSDEASRQTSNEASSE) is disordered. Residues 77-302 (EDVEVEGIIS…RTVLRYAGGR (226 aa)) enclose the Radical SAM core domain. Cys-92, Cys-96, and Cys-99 together coordinate [4Fe-4S] cluster. Residues Cys-135, Cys-168, Cys-227, and Arg-297 each contribute to the [2Fe-2S] cluster site.

It belongs to the radical SAM superfamily. Biotin synthase family. As to quaternary structure, homodimer. [4Fe-4S] cluster serves as cofactor. Requires [2Fe-2S] cluster as cofactor.

The enzyme catalyses (4R,5S)-dethiobiotin + (sulfur carrier)-SH + 2 reduced [2Fe-2S]-[ferredoxin] + 2 S-adenosyl-L-methionine = (sulfur carrier)-H + biotin + 2 5'-deoxyadenosine + 2 L-methionine + 2 oxidized [2Fe-2S]-[ferredoxin]. It functions in the pathway cofactor biosynthesis; biotin biosynthesis; biotin from 7,8-diaminononanoate: step 2/2. Functionally, catalyzes the conversion of dethiobiotin (DTB) to biotin by the insertion of a sulfur atom into dethiobiotin via a radical-based mechanism. The sequence is that of Biotin synthase from Arthrobacter sp. (strain FB24).